The primary structure comprises 322 residues: Alanine dehydrogenase (322 aa).

Lysine 65 (proton donor/acceptor) is an active-site residue. Residues arginine 108, 135–136 (TQ), 157–159 (DVR), 217–219 (GAD), lysine 223, and serine 290 each bind NAD(+).

The protein belongs to the ornithine cyclodeaminase/mu-crystallin family. Archaeal alanine dehydrogenase subfamily. As to quaternary structure, homodimer.

The enzyme catalyses L-alanine + NAD(+) + H2O = pyruvate + NH4(+) + NADH + H(+). Its function is as follows. Catalyzes the NAD(+)-dependent oxidative deamination of L-alanine to pyruvate, and the reverse reaction, the reductive amination of pyruvate. Its physiological role is not known. Cannot use NADP(+) instead of NAD(+) as a cosubstrate. In the deamination direction, can also efficiently use L-2-aminobutyrate as substrate. In the reductive amination direction, also exhibits high activity with 2-oxobutyrate and oxaloacetate as substrate. In contrast to bacterial homologs, does not exhibit any ornithine cyclodeaminase activity. The polypeptide is Alanine dehydrogenase (Archaeoglobus fulgidus (strain ATCC 49558 / DSM 4304 / JCM 9628 / NBRC 100126 / VC-16)).